A 374-amino-acid polypeptide reads, in one-letter code: Nucleosome assembly protein 1;1 (374 aa).

Residues 26-80 are a coiled coil; it reads VNALKNKLQDITGKPTNVLECLSPNVRKRVEVLKEIQSQHDELEAKFYEERAVLE. The short motif at 47-62 is the Nuclear export signal element; the sequence is LSPNVRKRVEVLKEIQ. Positions 223–228 match the Nuclear localization signal motif; that stretch reads KKKPKK. A compositionally biased stretch (acidic residues) spans 299 to 339; it reads AAEDDFADLEDDDDDDEEDDDDEDEEEEDDEDDEDEEDEDD. A disordered region spans residues 299-374; the sequence is AAEDDFADLE…GERPPECKQQ (76 aa). Basic residues predominate over residues 343 to 355; the sequence is KKKSSAVRKRGVR. Position 371 is a cysteine methyl ester (Cys-371). Cys-371 carries S-farnesyl cysteine lipidation. Positions 372 to 374 are cleaved as a propeptide — removed in mature form; the sequence is KQQ.

This sequence belongs to the nucleosome assembly protein (NAP) family. In terms of assembly, binds preferentially histones H4 and H1 in vitro. Interacts with CYCB1;1.

The protein localises to the nucleus. Its subcellular location is the cytoplasm. Its function is as follows. May modulate chromatin structure by regulation of nucleosome assembly/disassembly. Could function together with B-type cyclins in the regulation of microtubule dynamics. This Nicotiana tabacum (Common tobacco) protein is Nucleosome assembly protein 1;1 (NAP1;1).